Consider the following 414-residue polypeptide: MSEQSICQARASVMVYDDTSKKWVPIKPGQQGFSRINIYHNTASSTFRVVGVKLQDQQVVINYSIVKGLKYNQATPTFHQWRDARQVYGLNFASKEEATTFSNAMLFALNIMNSQEGGPSTQRQVQNGPSPEEMDIQRRQVMEQQHRQESLERRISATGPILPPGHPSSAASTTLSCSGPPPPPPPPVPPPPTGSTPPPPPPLPAGGAQGTNHDESSASGLAAALAGAKLRRVQRPEDASGGSSPSGTSKSDANRASSGGGGGGLMEEMNKLLAKRRKAASQTDKPADRKEDESQTEDPSTSPSPGTRATSQPPNSSEAGRKPWERSNSVEKPVSSLLSRTPSVAKSPEAKSPLQSQPHSRVKPAGSVNDVGLDALDLDRMKQEILEEVVRELHKVKEEIIDAIRQELSGISTT.

The WH1 domain maps to 1 to 112 (MSEQSICQAR…NAMLFALNIM (112 aa)). A Phosphoserine modification is found at S130. The interval 157–369 (ATGPILPPGH…SRVKPAGSVN (213 aa)) is disordered. Over residues 179-204 (GPPPPPPPPVPPPPTGSTPPPPPPLP) the composition is skewed to pro residues. Low complexity predominate over residues 217–228 (SASGLAAALAGA). The tract at residues 220–240 (GLAAALAGAKLRRVQRPEDAS) is EVH2 block A. The EVH2 stretch occupies residues 220-411 (GLAAALAGAK…DAIRQELSGI (192 aa)). The KLKR signature appears at 229 to 232 (KLRR). Positions 240-251 (SGGSSPSGTSKS) are enriched in low complexity. Residues S244 and S257 each carry the phosphoserine modification. The tract at residues 263–280 (GGLMEEMNKLLAKRRKAA) is EVH2 block B. The span at 297–318 (EDPSTSPSPGTRATSQPPNSSE) shows a compositional bias: polar residues. A phosphoserine mark is found at S302, S304, S327, S329, S339, S347, S352, and S367. A compositionally biased stretch (basic and acidic residues) spans 319 to 329 (AGRKPWERSNS). Residues 340–360 (RTPSVAKSPEAKSPLQSQPHS) are required for interaction with ZDHHC17. The EVH2 block C stretch occupies residues 377 to 411 (DLDRMKQEILEEVVRELHKVKEEIIDAIRQELSGI).

It belongs to the Ena/VASP family. As to quaternary structure, homotetramer. Binds to the SH3 domains of ABL1, LYN and SRC. Also binds to profilin, with preference for isoform IIa of PFN2, and the WW domain of APBB1/FE65. Binds to SEMA6A. Interacts, via the Pro-rich region, with the C-terminal SH3 domain of DNMBP. Interacts with RAPH1. Binds, via the EVH1 domain, the Pro-rich domain of Listeria monocytogenes actA. Binds, via the EVH1 domain, the Pro-rich domain of ZYX. Interacts with FYB1. Interacts with ZDHHC17. Post-translationally, phosphorylated by PKA; phosphorylation abolishes binding to SH3 domains of ABL and SRC. As to expression, highest expression in thymus and spleen (at protein level). Low levels in placenta, ovary, testis, fat and lung (at protein level). Isoform 1 and isoform 2 are expressed in cortical neurons and glial cells.

Its subcellular location is the cytoplasm. The protein resides in the cytoskeleton. It is found in the stress fiber. The protein localises to the cell projection. It localises to the lamellipodium. Its function is as follows. Ena/VASP proteins are actin-associated proteins involved in a range of processes dependent on cytoskeleton remodeling and cell polarity such as axon guidance and lamellipodial and filopodial dynamics in migrating cells. EVL enhances actin nucleation and polymerization. The protein is Ena/VASP-like protein (Evl) of Mus musculus (Mouse).